Consider the following 108-residue polypeptide: Phosphoribosyl-AMP cyclohydrolase (108 aa).

Asp78 is a Mg(2+) binding site. Cys79 is a binding site for Zn(2+). Mg(2+) is bound by residues Asp80 and Asp82. Zn(2+) is bound by residues Cys95 and Cys102.

The protein belongs to the PRA-CH family. Homodimer. The cofactor is Mg(2+). Zn(2+) serves as cofactor.

The protein resides in the cytoplasm. The catalysed reaction is 1-(5-phospho-beta-D-ribosyl)-5'-AMP + H2O = 1-(5-phospho-beta-D-ribosyl)-5-[(5-phospho-beta-D-ribosylamino)methylideneamino]imidazole-4-carboxamide. It participates in amino-acid biosynthesis; L-histidine biosynthesis; L-histidine from 5-phospho-alpha-D-ribose 1-diphosphate: step 3/9. Functionally, catalyzes the hydrolysis of the adenine ring of phosphoribosyl-AMP. The polypeptide is Phosphoribosyl-AMP cyclohydrolase (Nitrosopumilus maritimus (strain SCM1)).